We begin with the raw amino-acid sequence, 936 residues long: MLRPEISSTSPSAPAVSPSSGETRSPQGPRYNFGLQETPQSRPSVQVVSASTCPGTSGAAGDRSSSSSSLPCPAPNSRPAQGSYFGNKRAYAENTVASNFTFGASSSSARDTNYPQTLKTPLSTGNPQRSGYKSWTPQVGYSASSSSAISAHSPSVIVAVVEGRGLARGEIGMASIDLKNPQIILSQFADNTTYAKVITKLKILSPLEIIMSNTACAVGNSTKLFTLITENFKNVNFTTIQRKYFNETKGLEYIEQLCIAEFSTVLMEVQSKYYCLAAVAALLKYVEFIQNSVYAPKSLKICFQGSEQTAMIDSSSAQNLELLINNQDYRNNHTLFGVLNYTKTPGGSRRLRSNILEPLVDIETINMRLDCVQELLQDEELFFGLQSVISRFLDTEQLLSVLVQIPKQDTVNAAESKITNLIYLKHTLELVDPLKIAMKNCNTPLLRAYYGSLEDKRFGIILEKIKTVINDDARYMKGCLNMRTQKCYAVRSNINEFLDIARRTYTEIVDDIAGMISQLGEKYSLPLRTSFSSARGFFIQMTTDCIALPSDQLPSEFIKISKVKNSYSFTSADLIKMNERCQESLREIYHMTYMIVCKLLSEIYEHIHCLYKLSDTVSMLDMLLSFAHACTLSDYVRPEFTDTLAIKQGWHPILEKISAEKPIANNTYVTEGSNFLIITGPNMSGKSTYLKQIALCQIMAQIGSYVPAEYSSFRIAKQIFTRISTDDDIETNSSTFMKEMKEIAYILHNANDKSLILIDELGRGTNTEEGIGICYAVCEYLLSLKAFTLFATHFLELCHIDALYPNVENMHFEVQHVKNTSRNKEAILYTYKLSKGLTEEKNYGLKAAEVSSLPPSIVLDAKEITTQITRQILQNQRSTPEMERQRAVYHLATRLVQTARNSQLDPDSLRIYLSNLKKKYKEDFPRTEQVPEKTEE.

Disordered regions lie at residues 1–83 (MLRP…AQGS) and 103–133 (GASS…SGYK). Residues 7-20 (SSTSPSAPAVSPSS) show a composition bias toward low complexity. The span at 35-55 (LQETPQSRPSVQVVSASTCPG) shows a compositional bias: polar residues. An ATP-binding site is contributed by 680–687 (GPNMSGKS).

The protein belongs to the DNA mismatch repair MutS family. Heterooligomer of MSH4 and MSH5. As to expression, highly expressed in testis. Also expressed in the ovary.

The protein resides in the chromosome. Involved in meiotic recombination. Required for reciprocal recombination and proper segregation of homologous chromosomes at meiosis. The protein is MutS protein homolog 4 (MSH4) of Homo sapiens (Human).